We begin with the raw amino-acid sequence, 440 residues long: Ribosomal protein uS12 methylthiotransferase RimO (440 aa).

An MTTase N-terminal domain is found at Pro5–Pro115. Positions 14, 50, 79, 148, 152, and 155 each coordinate [4Fe-4S] cluster. The Radical SAM core domain occupies Leu134–Ala372. Residues Gln375 to Ile440 form the TRAM domain.

It belongs to the methylthiotransferase family. RimO subfamily. Requires [4Fe-4S] cluster as cofactor.

It localises to the cytoplasm. The catalysed reaction is L-aspartate(89)-[ribosomal protein uS12]-hydrogen + (sulfur carrier)-SH + AH2 + 2 S-adenosyl-L-methionine = 3-methylsulfanyl-L-aspartate(89)-[ribosomal protein uS12]-hydrogen + (sulfur carrier)-H + 5'-deoxyadenosine + L-methionine + A + S-adenosyl-L-homocysteine + 2 H(+). In terms of biological role, catalyzes the methylthiolation of an aspartic acid residue of ribosomal protein uS12. The polypeptide is Ribosomal protein uS12 methylthiotransferase RimO (Stutzerimonas stutzeri (strain A1501) (Pseudomonas stutzeri)).